A 370-amino-acid chain; its full sequence is 4-hydroxy-3-methylbut-2-en-1-yl diphosphate synthase (flavodoxin) (370 aa).

Positions 270, 273, 305, and 312 each coordinate [4Fe-4S] cluster.

The protein belongs to the IspG family. [4Fe-4S] cluster is required as a cofactor.

The enzyme catalyses (2E)-4-hydroxy-3-methylbut-2-enyl diphosphate + oxidized [flavodoxin] + H2O + 2 H(+) = 2-C-methyl-D-erythritol 2,4-cyclic diphosphate + reduced [flavodoxin]. Its pathway is isoprenoid biosynthesis; isopentenyl diphosphate biosynthesis via DXP pathway; isopentenyl diphosphate from 1-deoxy-D-xylulose 5-phosphate: step 5/6. Its function is as follows. Converts 2C-methyl-D-erythritol 2,4-cyclodiphosphate (ME-2,4cPP) into 1-hydroxy-2-methyl-2-(E)-butenyl 4-diphosphate. This Ectopseudomonas mendocina (strain ymp) (Pseudomonas mendocina) protein is 4-hydroxy-3-methylbut-2-en-1-yl diphosphate synthase (flavodoxin).